The chain runs to 689 residues: Elongation factor G (689 aa).

Positions 8 to 283 constitute a tr-type G domain; sequence SKCRNIGIMA…AVVDFLPAPN (276 aa). Residues 17–24, 81–85, and 135–138 contribute to the GTP site; these read AHIDAGKT, DTPGH, and NKMD.

It belongs to the TRAFAC class translation factor GTPase superfamily. Classic translation factor GTPase family. EF-G/EF-2 subfamily.

It localises to the cytoplasm. Its function is as follows. Catalyzes the GTP-dependent ribosomal translocation step during translation elongation. During this step, the ribosome changes from the pre-translocational (PRE) to the post-translocational (POST) state as the newly formed A-site-bound peptidyl-tRNA and P-site-bound deacylated tRNA move to the P and E sites, respectively. Catalyzes the coordinated movement of the two tRNA molecules, the mRNA and conformational changes in the ribosome. This chain is Elongation factor G, found in Ehrlichia ruminantium (strain Welgevonden).